A 183-amino-acid polypeptide reads, in one-letter code: Dual-action ribosomal maturation protein DarP (183 aa).

Belongs to the DarP family.

Its subcellular location is the cytoplasm. Member of a network of 50S ribosomal subunit biogenesis factors which assembles along the 30S-50S interface, preventing incorrect 23S rRNA structures from forming. Promotes peptidyl transferase center (PTC) maturation. The protein is Dual-action ribosomal maturation protein DarP of Klebsiella pneumoniae (strain 342).